Here is a 93-residue protein sequence, read N- to C-terminus: Large ribosomal subunit protein bL31B (93 aa).

The protein belongs to the bacterial ribosomal protein bL31 family. Type B subfamily. Part of the 50S ribosomal subunit.

This is Large ribosomal subunit protein bL31B from Psychrobacter arcticus (strain DSM 17307 / VKM B-2377 / 273-4).